The following is a 299-amino-acid chain: Probable xyloglucan endotransglucosylase/hydrolase protein 10 (299 aa).

Residues 1 to 29 form the signal peptide; it reads MTLINRSKPFVLLVGFSIISSLLLWVSQA. The region spanning 30–225 is the GH16 domain; sequence SVVSSGDFNK…WSKGPFVASF (196 aa). An N-linked (GlcNAc...) asparagine glycan is attached at asparagine 51. Residue glutamate 111 is the Nucleophile of the active site. Glutamate 115 functions as the Proton donor in the catalytic mechanism. Residues glutamate 115, 128–130, 138–140, 204–205, and glycine 209 each bind xyloglucan; these read QTN, NRE, and SW. 2 cysteine pairs are disulfide-bonded: cysteine 233/cysteine 242 and cysteine 280/cysteine 294. The N-linked (GlcNAc...) asparagine glycan is linked to asparagine 238. A xyloglucan-binding site is contributed by arginine 285.

This sequence belongs to the glycosyl hydrolase 16 family. XTH group 1 subfamily. Contains at least one intrachain disulfide bond essential for its enzymatic activity.

The protein resides in the secreted. The protein localises to the cell wall. It is found in the extracellular space. It localises to the apoplast. The catalysed reaction is breaks a beta-(1-&gt;4) bond in the backbone of a xyloglucan and transfers the xyloglucanyl segment on to O-4 of the non-reducing terminal glucose residue of an acceptor, which can be a xyloglucan or an oligosaccharide of xyloglucan.. In terms of biological role, catalyzes xyloglucan endohydrolysis (XEH) and/or endotransglycosylation (XET). Cleaves and religates xyloglucan polymers, an essential constituent of the primary cell wall, and thereby participates in cell wall construction of growing tissues. The polypeptide is Probable xyloglucan endotransglucosylase/hydrolase protein 10 (XTH10) (Arabidopsis thaliana (Mouse-ear cress)).